A 180-amino-acid chain; its full sequence is ATP-dependent protease subunit HslV (180 aa).

Thr-8 is a catalytic residue. Residues Ala-165, Cys-168, and Thr-171 each coordinate Na(+).

This sequence belongs to the peptidase T1B family. HslV subfamily. In terms of assembly, a double ring-shaped homohexamer of HslV is capped on each side by a ring-shaped HslU homohexamer. The assembly of the HslU/HslV complex is dependent on binding of ATP.

It is found in the cytoplasm. It carries out the reaction ATP-dependent cleavage of peptide bonds with broad specificity.. Allosterically activated by HslU binding. Protease subunit of a proteasome-like degradation complex believed to be a general protein degrading machinery. The sequence is that of ATP-dependent protease subunit HslV from Staphylococcus epidermidis (strain ATCC 12228 / FDA PCI 1200).